The following is a 92-amino-acid chain: DNA/RNA-binding protein Alba (92 aa).

Lys11 bears the N6-acetyllysine mark.

The protein belongs to the histone-like Alba family. Post-translationally, acetylated. Acetylation at Lys-11 decreases DNA-binding affinity.

Its subcellular location is the cytoplasm. It is found in the chromosome. Binds double-stranded DNA tightly but without sequence specificity. Involved in DNA compaction. This Pyrobaculum aerophilum (strain ATCC 51768 / DSM 7523 / JCM 9630 / CIP 104966 / NBRC 100827 / IM2) protein is DNA/RNA-binding protein Alba.